Consider the following 267-residue polypeptide: Hydroxyethylthiazole kinase (267 aa).

M48 lines the substrate pocket. ATP is bound by residues R124 and S170. G197 is a binding site for substrate.

Belongs to the Thz kinase family. Mg(2+) serves as cofactor.

The catalysed reaction is 5-(2-hydroxyethyl)-4-methylthiazole + ATP = 4-methyl-5-(2-phosphooxyethyl)-thiazole + ADP + H(+). It functions in the pathway cofactor biosynthesis; thiamine diphosphate biosynthesis; 4-methyl-5-(2-phosphoethyl)-thiazole from 5-(2-hydroxyethyl)-4-methylthiazole: step 1/1. In terms of biological role, catalyzes the phosphorylation of the hydroxyl group of 4-methyl-5-beta-hydroxyethylthiazole (THZ). The sequence is that of Hydroxyethylthiazole kinase from Leptospira biflexa serovar Patoc (strain Patoc 1 / Ames).